The sequence spans 117 residues: Holo-[acyl-carrier-protein] synthase (117 aa).

Positions 8 and 57 each coordinate Mg(2+).

This sequence belongs to the P-Pant transferase superfamily. AcpS family. Mg(2+) is required as a cofactor.

It localises to the cytoplasm. It catalyses the reaction apo-[ACP] + CoA = holo-[ACP] + adenosine 3',5'-bisphosphate + H(+). In terms of biological role, transfers the 4'-phosphopantetheine moiety from coenzyme A to a Ser of acyl-carrier-protein. The polypeptide is Holo-[acyl-carrier-protein] synthase (Limosilactobacillus reuteri (Lactobacillus reuteri)).